A 486-amino-acid polypeptide reads, in one-letter code: Ribulose bisphosphate carboxylase large chain (486 aa).

Residues N126 and T176 each contribute to the substrate site. The Proton acceptor role is filled by K178. K180 contributes to the substrate binding site. Mg(2+) is bound by residues K204, D206, and E207. K204 carries the post-translational modification N6-carboxylysine. H296 acts as the Proton acceptor in catalysis. Substrate contacts are provided by R297, H329, and S381.

The protein belongs to the RuBisCO large chain family. Type I subfamily. In terms of assembly, heterohexadecamer of 8 large chains and 8 small chains. It depends on Mg(2+) as a cofactor.

It catalyses the reaction 2 (2R)-3-phosphoglycerate + 2 H(+) = D-ribulose 1,5-bisphosphate + CO2 + H2O. The enzyme catalyses D-ribulose 1,5-bisphosphate + O2 = 2-phosphoglycolate + (2R)-3-phosphoglycerate + 2 H(+). Its function is as follows. RuBisCO catalyzes two reactions: the carboxylation of D-ribulose 1,5-bisphosphate, the primary event in carbon dioxide fixation, as well as the oxidative fragmentation of the pentose substrate. Both reactions occur simultaneously and in competition at the same active site. The protein is Ribulose bisphosphate carboxylase large chain of Methylacidiphilum infernorum (isolate V4) (Methylokorus infernorum (strain V4)).